Reading from the N-terminus, the 274-residue chain is Large ribosomal subunit protein uL2cz/uL2cy (274 aa).

The span at M1–N15 shows a compositional bias: polar residues. 2 disordered regions span residues M1–V22 and P225–K274.

It belongs to the universal ribosomal protein uL2 family. Part of the 50S ribosomal subunit.

The protein resides in the plastid. Its subcellular location is the chloroplast. The polypeptide is Large ribosomal subunit protein uL2cz/uL2cy (rpl2-A) (Lobularia maritima (Sweet alyssum)).